A 123-amino-acid polypeptide reads, in one-letter code: MVRLVGVDLPRNKRIAYALTYIHGIGLTSARKIIEIANINPETRTVDLTTEETVALRQTLEESDLKLEGDLRRFNGLNIKRLNEINCHRGKRHRNNLPVRGQRTRTNARSRRGSKKTVTGKKK.

The disordered stretch occupies residues 89 to 123 (RGKRHRNNLPVRGQRTRTNARSRRGSKKTVTGKKK). The segment covering 102–123 (QRTRTNARSRRGSKKTVTGKKK) has biased composition (basic residues).

The protein belongs to the universal ribosomal protein uS13 family. Part of the 30S ribosomal subunit.

The protein resides in the plastid. The protein localises to the chloroplast. In terms of biological role, located at the top of the head of the 30S subunit, it contacts several helices of the 16S rRNA. The chain is Small ribosomal subunit protein uS13c from Phaeodactylum tricornutum (strain CCAP 1055/1).